The primary structure comprises 1230 residues: ATP-dependent helicase/nuclease subunit A (1230 aa).

The 477-residue stretch at 4 to 480 folds into the UvrD-like helicase ATP-binding domain; the sequence is RNWTGPQEAA…IDLSHNFRSR (477 aa). 25–32 provides a ligand contact to ATP; it reads AGAGSGKT. The region spanning 517 to 799 is the UvrD-like helicase C-terminal domain; the sequence is AQLEGSGPPV…RIMSIHQAKG (283 aa). The disordered stretch occupies residues 535–554; sequence TSVGRDTAGTADDEPDRSDE. Residues 545–554 show a composition bias toward acidic residues; it reads ADDEPDRSDE.

The protein belongs to the helicase family. AddA subfamily. As to quaternary structure, heterodimer of AddA and AddB/RexB. Requires Mg(2+) as cofactor.

It catalyses the reaction Couples ATP hydrolysis with the unwinding of duplex DNA by translocating in the 3'-5' direction.. It carries out the reaction ATP + H2O = ADP + phosphate + H(+). Its function is as follows. The heterodimer acts as both an ATP-dependent DNA helicase and an ATP-dependent, dual-direction single-stranded exonuclease. Recognizes the chi site generating a DNA molecule suitable for the initiation of homologous recombination. The AddA nuclease domain is required for chi fragment generation; this subunit has the helicase and 3' -&gt; 5' nuclease activities. The polypeptide is ATP-dependent helicase/nuclease subunit A (Desulforudis audaxviator (strain MP104C)).